The following is a 745-amino-acid chain: Kinesin-like protein KIN-14M (745 aa).

The interval Met-1–Pro-31 is disordered. Residues Met-1 to Thr-35 are globular. Microtubule-binding regions lie at residues Tyr-65–Gln-77 and Ser-198–Gly-745. Coiled coils occupy residues Phe-76–Glu-223 and Lys-259–Arg-389. Residues Asn-387–Cys-724 enclose the Kinesin motor domain. Gly-472 to Thr-479 contacts ATP.

It belongs to the TRAFAC class myosin-kinesin ATPase superfamily. Kinesin family. KIN-14 subfamily. As to quaternary structure, bind to microtubules in an ATP-insensitive manner (in vitro). Homodimer and heterodimer with KIN14N/KATC (in vitro).

The protein resides in the cytoplasm. The protein localises to the cytoskeleton. In Arabidopsis thaliana (Mouse-ear cress), this protein is Kinesin-like protein KIN-14M.